The primary structure comprises 342 residues: MVKVYYNGDIKENVLAGKTVAVIGYGSQGHAHALNLKESGVDVIVGVRQGKSFTQAQEDGHKVFSVKEAAAQAEIIMVLLPDEQQQKVYEAEIKDELTAGKSLVFAHGFNVHFHQIVPPADVDVFLVAPKGPGHLVRRTYEQGAGVPALFAIYQDVTGEARDKALAYAKGIGGARAGVLETTFKEETETDLFGEQAVLCGGLSALVKAGFETLTEAGYQPELAYFECLHELKLIVDLMYEEGLAGMRYSISDTAQWGDFVSGPRVVDAKVKESMKEVLKDIQNGTFAKEWIVENQVNRPRFNAINASENEHQIEVVGRKLREMMPFVKQGKKKEAVVSVAQN.

The 180-residue stretch at 2-181 (VKVYYNGDIK…GGARAGVLET (180 aa)) folds into the KARI N-terminal Rossmann domain. NADP(+) is bound by residues 25–28 (YGSQ), Arg-48, Ser-52, and 82–85 (DEQQ). The active site involves His-107. Residue Gly-133 participates in NADP(+) binding. The KARI C-terminal knotted domain maps to 182–327 (TFKEETETDL…RKLREMMPFV (146 aa)). Residues Asp-190, Glu-194, Glu-226, and Glu-230 each contribute to the Mg(2+) site. Residue Ser-251 participates in substrate binding.

It belongs to the ketol-acid reductoisomerase family. Mg(2+) serves as cofactor.

It catalyses the reaction (2R)-2,3-dihydroxy-3-methylbutanoate + NADP(+) = (2S)-2-acetolactate + NADPH + H(+). The enzyme catalyses (2R,3R)-2,3-dihydroxy-3-methylpentanoate + NADP(+) = (S)-2-ethyl-2-hydroxy-3-oxobutanoate + NADPH + H(+). The protein operates within amino-acid biosynthesis; L-isoleucine biosynthesis; L-isoleucine from 2-oxobutanoate: step 2/4. It functions in the pathway amino-acid biosynthesis; L-valine biosynthesis; L-valine from pyruvate: step 2/4. Functionally, involved in the biosynthesis of branched-chain amino acids (BCAA). Catalyzes an alkyl-migration followed by a ketol-acid reduction of (S)-2-acetolactate (S2AL) to yield (R)-2,3-dihydroxy-isovalerate. In the isomerase reaction, S2AL is rearranged via a Mg-dependent methyl migration to produce 3-hydroxy-3-methyl-2-ketobutyrate (HMKB). In the reductase reaction, this 2-ketoacid undergoes a metal-dependent reduction by NADPH to yield (R)-2,3-dihydroxy-isovalerate. This chain is Ketol-acid reductoisomerase (NADP(+)), found in Bacillus subtilis (strain 168).